The primary structure comprises 178 residues: Fatty-acid and retinol-binding protein 1 (178 aa).

A signal peptide spans 1-16 (MYHRLILLALIGTTMA). Coiled coils occupy residues 67 to 89 (DAAL…ELRN) and 130 to 153 (KQAA…ELKV).

This sequence belongs to the fatty-acid and retinol-binding protein (FARBP) family. Post-translationally, not glycosylated.

It localises to the secreted. Functionally, binds retinol and different fatty acids. The polypeptide is Fatty-acid and retinol-binding protein 1 (Wuchereria bancrofti).